The chain runs to 76 residues: Exodeoxyribonuclease 7 small subunit (76 aa).

The protein belongs to the XseB family. As to quaternary structure, heterooligomer composed of large and small subunits.

The protein resides in the cytoplasm. It carries out the reaction Exonucleolytic cleavage in either 5'- to 3'- or 3'- to 5'-direction to yield nucleoside 5'-phosphates.. In terms of biological role, bidirectionally degrades single-stranded DNA into large acid-insoluble oligonucleotides, which are then degraded further into small acid-soluble oligonucleotides. The chain is Exodeoxyribonuclease 7 small subunit from Lactiplantibacillus plantarum (strain ATCC BAA-793 / NCIMB 8826 / WCFS1) (Lactobacillus plantarum).